A 337-amino-acid chain; its full sequence is Mannitol dehydrogenase (337 aa).

The Zn(2+) site is built by Cys27, His49, Cys80, Cys83, Cys86, Cys94, and Cys143.

It belongs to the zinc-containing alcohol dehydrogenase family. It depends on Zn(2+) as a cofactor.

The enzyme catalyses D-mannitol + NAD(+) = D-mannose + NADH + H(+). Functionally, oxidizes mannitol to mannose. Provides the initial step by which translocated mannitol is committed to central metabolism and, by regulating mannitol pool size, is important in regulating salt tolerance at the cellular level. This is Mannitol dehydrogenase (ELI3) from Petroselinum crispum (Parsley).